We begin with the raw amino-acid sequence, 144 residues long: Putative low molecular weight protein-tyrosine-phosphatase (144 aa).

C9 acts as the Nucleophile in catalysis. The active site involves R15. The active-site Proton donor is the D115.

The protein belongs to the low molecular weight phosphotyrosine protein phosphatase family.

It carries out the reaction O-phospho-L-tyrosyl-[protein] + H2O = L-tyrosyl-[protein] + phosphate. This is Putative low molecular weight protein-tyrosine-phosphatase from Klebsiella pneumoniae.